A 408-amino-acid chain; its full sequence is Glutaryl-CoA dehydrogenase, mitochondrial (408 aa).

The N-terminal 13 residues, 1–13, are a transit peptide targeting the mitochondrion; that stretch reads KGGKTQGRSAKSS. Residues 107-108 and Ser-156 each bind substrate; that span reads RS. FAD-binding positions include 147–156, Ser-156, and 182–184; these read FGLTEPNHGS and WIT. Position 210 is an N6-acetyllysine (Lys-210). 257-264 is a substrate binding site; that stretch reads FGCLNNAR. FAD is bound by residues Arg-289, Gln-300, and 357 to 361; that span reads DMLGG. Glu-384 (proton acceptor) is an active-site residue. A substrate-binding site is contributed by Gly-385. Residues Thr-386, 386 to 388, and Phe-404 contribute to the FAD site; that span reads THD.

It belongs to the acyl-CoA dehydrogenase family. In terms of assembly, homotetramer. It depends on FAD as a cofactor.

The protein resides in the mitochondrion matrix. The enzyme catalyses glutaryl-CoA + oxidized [electron-transfer flavoprotein] + 2 H(+) = (2E)-butenoyl-CoA + reduced [electron-transfer flavoprotein] + CO2. It participates in amino-acid metabolism; lysine degradation. It functions in the pathway amino-acid metabolism; tryptophan metabolism. Functionally, catalyzes the oxidative decarboxylation of glutaryl-CoA to crotonyl-CoA and CO(2) in the degradative pathway of L-lysine, L-hydroxylysine, and L-tryptophan metabolism. It uses electron transfer flavoprotein as its electron acceptor. In Sus scrofa (Pig), this protein is Glutaryl-CoA dehydrogenase, mitochondrial (GCDH).